A 98-amino-acid chain; its full sequence is N(2)-fixation sustaining protein CowN (98 aa).

It belongs to the CowN family.

Is required to sustain N(2)-dependent growth in the presence of low levels of carbon monoxide (CO). Probably acts by protecting the N(2) fixation ability of the nitrogenase complex, which is inactivated in the presence of CO. The protein is N(2)-fixation sustaining protein CowN of Dechloromonas aromatica (strain RCB).